A 118-amino-acid chain; its full sequence is Probable mitochondrial pyruvate carrier 2 (118 aa).

A run of 3 helical transmembrane segments spans residues 19-35 (VHFW…LSGI), 50-66 (YAAL…WSLI), and 72-94 (YFNA…RILV).

Belongs to the mitochondrial pyruvate carrier (MPC) (TC 2.A.105) family. The functional 150 kDa pyruvate import complex is a heteromer of mpc1 and mpc2.

The protein resides in the mitochondrion inner membrane. Functionally, mediates the uptake of pyruvate into mitochondria. This is Probable mitochondrial pyruvate carrier 2 from Schizosaccharomyces pombe (strain 972 / ATCC 24843) (Fission yeast).